The primary structure comprises 430 residues: Tol-Pal system protein TolB (430 aa).

An N-terminal signal peptide occupies residues 1-21 (MKQALRVAFGFLILWASVLHA).

The protein belongs to the TolB family. In terms of assembly, the Tol-Pal system is composed of five core proteins: the inner membrane proteins TolA, TolQ and TolR, the periplasmic protein TolB and the outer membrane protein Pal. They form a network linking the inner and outer membranes and the peptidoglycan layer.

The protein localises to the periplasm. In terms of biological role, part of the Tol-Pal system, which plays a role in outer membrane invagination during cell division and is important for maintaining outer membrane integrity. TolB occupies a key intermediary position in the Tol-Pal system because it communicates directly with both membrane-embedded components, Pal in the outer membrane and TolA in the inner membrane. The chain is Tol-Pal system protein TolB from Shigella flexneri serotype 5b (strain 8401).